We begin with the raw amino-acid sequence, 164 residues long: Putative 4-hydroxy-4-methyl-2-oxoglutarate aldolase (164 aa).

Substrate is bound by residues 80–83 and arginine 102; that span reads GGNL. Aspartate 103 contacts a divalent metal cation.

Belongs to the class II aldolase/RraA-like family. Homotrimer. A divalent metal cation is required as a cofactor.

The catalysed reaction is 4-hydroxy-4-methyl-2-oxoglutarate = 2 pyruvate. It catalyses the reaction oxaloacetate + H(+) = pyruvate + CO2. Its function is as follows. Catalyzes the aldol cleavage of 4-hydroxy-4-methyl-2-oxoglutarate (HMG) into 2 molecules of pyruvate. Also contains a secondary oxaloacetate (OAA) decarboxylase activity due to the common pyruvate enolate transition state formed following C-C bond cleavage in the retro-aldol and decarboxylation reactions. This chain is Putative 4-hydroxy-4-methyl-2-oxoglutarate aldolase, found in Paraburkholderia phytofirmans (strain DSM 17436 / LMG 22146 / PsJN) (Burkholderia phytofirmans).